The following is a 497-amino-acid chain: MIDDQRDMQVDSVNQEENVDSGETKQNTVTEVPRTVLQDVEANIAALMQATKQRDPRLVYRSLRTTSNICHRLNADVLGQLIKKYYSFDNSLKNELLELIDMPQNGDDSSTSITNGNGNTIFPEVDMYLQLLLSMTLYYNEKYEVGAEYIKKVIARLQSYDRRTLDQIAAKLYFYYILFFEKCNRSVECRNTLLSVHRTASLRHDSETQAMVLTLLLRNYIQFNLYDQADRLVSKTSFLTNASNNLAIRYQYYLGRIRAIQLDYTTAHEHLVSAIRKAPNTVYAVQFLEAVYKLHIVVQLLMGEIPERRIFRQKSLEKTLVPYLRISQAVRIGDLCAFTDALSKYEAEFRFDGLYTLICRLRHTVIKTGLRMISLSYSRISLRDVCIKLGLDSEESAEYIVAKGIRDGVIDASIDHSNAFMASNEAMDIYSTEQPQQAFHERIQFCLALHNDSIKSMRYPMDAHKSELEGVEEARRRMDKEMAEADLDDDEPDLGEF.

A disordered region spans residues 1 to 27 (MIDDQRDMQVDSVNQEENVDSGETKQN). A PCI domain is found at 248–428 (IRYQYYLGRI…AFMASNEAMD (181 aa)). Over residues 470–483 (GVEEARRRMDKEMA) the composition is skewed to basic and acidic residues. Positions 470 to 497 (GVEEARRRMDKEMAEADLDDDEPDLGEF) are disordered. Residues 484–497 (EADLDDDEPDLGEF) are compositionally biased toward acidic residues.

This sequence belongs to the proteasome subunit S3 family. The 26S proteasome is composed of a core protease, known as the 20S proteasome, capped at one or both ends by the 19S regulatory complex (RC). The RC is composed of at least 18 different subunits in two subcomplexes, the base and the lid, which form the portions proximal and distal to the 20S proteolytic core, respectively.

Its function is as follows. Acts as a regulatory subunit of the 26 proteasome which is involved in the ATP-dependent degradation of ubiquitinated proteins. This chain is Probable 26S proteasome regulatory subunit rpn3 (rpn3), found in Schizosaccharomyces pombe (strain 972 / ATCC 24843) (Fission yeast).